The following is a 694-amino-acid chain: Elongation factor G (694 aa).

In terms of domain architecture, tr-type G spans Glu10–Leu285. Residues Ala19–Thr26, Asp83–His87, and Asn137–Asp140 contribute to the GTP site.

The protein belongs to the TRAFAC class translation factor GTPase superfamily. Classic translation factor GTPase family. EF-G/EF-2 subfamily.

It localises to the cytoplasm. In terms of biological role, catalyzes the GTP-dependent ribosomal translocation step during translation elongation. During this step, the ribosome changes from the pre-translocational (PRE) to the post-translocational (POST) state as the newly formed A-site-bound peptidyl-tRNA and P-site-bound deacylated tRNA move to the P and E sites, respectively. Catalyzes the coordinated movement of the two tRNA molecules, the mRNA and conformational changes in the ribosome. In Lactobacillus delbrueckii subsp. bulgaricus (strain ATCC BAA-365 / Lb-18), this protein is Elongation factor G.